Here is a 291-residue protein sequence, read N- to C-terminus: Bifunctional protein FolD (291 aa).

NADP(+) is bound by residues 165–167, Ser190, and Ile231; that span reads GRS.

This sequence belongs to the tetrahydrofolate dehydrogenase/cyclohydrolase family. Homodimer.

It catalyses the reaction (6R)-5,10-methylene-5,6,7,8-tetrahydrofolate + NADP(+) = (6R)-5,10-methenyltetrahydrofolate + NADPH. The catalysed reaction is (6R)-5,10-methenyltetrahydrofolate + H2O = (6R)-10-formyltetrahydrofolate + H(+). It participates in one-carbon metabolism; tetrahydrofolate interconversion. Its function is as follows. Catalyzes the oxidation of 5,10-methylenetetrahydrofolate to 5,10-methenyltetrahydrofolate and then the hydrolysis of 5,10-methenyltetrahydrofolate to 10-formyltetrahydrofolate. The chain is Bifunctional protein FolD from Azoarcus sp. (strain BH72).